We begin with the raw amino-acid sequence, 352 residues long: Histidine biosynthesis bifunctional protein HisB (352 aa).

Residues 1–163 form a histidinol-phosphatase region; it reads MKKILFIDRD…MVASAIINDA (163 aa). The Nucleophile role is filled by D8. The Mg(2+) site is built by D8 and D10. The active-site Proton donor is D10. Positions 91, 93, 99, and 101 each coordinate Zn(2+). D128 contributes to the Mg(2+) binding site. The imidazoleglycerol-phosphate dehydratase stretch occupies residues 164–352; sequence RKASVQRKTK…NYLPSTKGVL (189 aa).

The protein in the N-terminal section; belongs to the histidinol-phosphatase family. In the C-terminal section; belongs to the imidazoleglycerol-phosphate dehydratase family. Mg(2+) is required as a cofactor. Requires Zn(2+) as cofactor.

The protein resides in the cytoplasm. The catalysed reaction is D-erythro-1-(imidazol-4-yl)glycerol 3-phosphate = 3-(imidazol-4-yl)-2-oxopropyl phosphate + H2O. It carries out the reaction L-histidinol phosphate + H2O = L-histidinol + phosphate. The protein operates within amino-acid biosynthesis; L-histidine biosynthesis; L-histidine from 5-phospho-alpha-D-ribose 1-diphosphate: step 6/9. It participates in amino-acid biosynthesis; L-histidine biosynthesis; L-histidine from 5-phospho-alpha-D-ribose 1-diphosphate: step 8/9. The chain is Histidine biosynthesis bifunctional protein HisB from Legionella pneumophila (strain Lens).